Consider the following 55-residue polypeptide: uncharacterized protein (55 aa).

This is an uncharacterized protein from Acidithiobacillus ferrooxidans (Thiobacillus ferrooxidans).